Here is a 398-residue protein sequence, read N- to C-terminus: Acetate kinase 1 (398 aa).

Asn9 contacts Mg(2+). Lys16 lines the ATP pocket. Arg89 is a binding site for substrate. The active-site Proton donor/acceptor is the Asp146. Residues 206–210 (HLGNG), 281–283 (DCR), and 329–333 (GIGEN) contribute to the ATP site. Residue Glu384 participates in Mg(2+) binding.

Belongs to the acetokinase family. Homodimer. The cofactor is Mg(2+). Mn(2+) is required as a cofactor.

The protein resides in the cytoplasm. It carries out the reaction acetate + ATP = acetyl phosphate + ADP. Its pathway is metabolic intermediate biosynthesis; acetyl-CoA biosynthesis; acetyl-CoA from acetate: step 1/2. Functionally, catalyzes the formation of acetyl phosphate from acetate and ATP. Can also catalyze the reverse reaction. The protein is Acetate kinase 1 of Vibrio vulnificus (strain CMCP6).